The primary structure comprises 247 residues: Protein LIFEGUARD 4 (247 aa).

7 consecutive transmembrane segments (helical) span residues 42 to 62, 75 to 95, 105 to 125, 130 to 150, 165 to 185, 188 to 208, and 222 to 242; these read VYSI…TVVF, AGLA…CPLY, YLLL…TCAF, VILE…VYTF, FLFG…FFPL, ISVM…IVYD, and IWAA…LLTI.

It belongs to the BI1 family.

It localises to the membrane. The sequence is that of Protein LIFEGUARD 4 from Arabidopsis thaliana (Mouse-ear cress).